Consider the following 644-residue polypeptide: DNA mismatch repair protein MutL (644 aa).

Positions 336-400 are disordered; it reads ERPFEPSSPQ…EISRDSSLGE (65 aa). The segment covering 373 to 400 has biased composition (basic and acidic residues); it reads SKTHSTWDEASRVDTSRAEISRDSSLGE.

It belongs to the DNA mismatch repair MutL/HexB family.

Its function is as follows. This protein is involved in the repair of mismatches in DNA. It is required for dam-dependent methyl-directed DNA mismatch repair. May act as a 'molecular matchmaker', a protein that promotes the formation of a stable complex between two or more DNA-binding proteins in an ATP-dependent manner without itself being part of a final effector complex. The protein is DNA mismatch repair protein MutL of Shewanella sp. (strain MR-7).